We begin with the raw amino-acid sequence, 249 residues long: 3-deoxy-D-manno-octulosonic acid kinase (249 aa).

Asp-175 is a catalytic residue.

This sequence belongs to the protein kinase superfamily. KdkA/RfaP family.

The protein localises to the cell inner membrane. It carries out the reaction an alpha-Kdo-(2-&gt;6)-lipid IVA + ATP = a 4-O-phospho-alpha-Kdo-(2-&gt;6)-lipid IVA + ADP + H(+). It functions in the pathway bacterial outer membrane biogenesis; LPS core biosynthesis. Functionally, catalyzes the ATP-dependent phosphorylation of the 3-deoxy-D-manno-octulosonic acid (Kdo) residue in Kdo-lipid IV(A) at the 4-OH position. In Xanthomonas oryzae pv. oryzae (strain PXO99A), this protein is 3-deoxy-D-manno-octulosonic acid kinase.